The primary structure comprises 218 residues: 3-oxo-tetronate 4-phosphate decarboxylase (218 aa).

E86 (proton acceptor) is an active-site residue. E86, H105, and H107 together coordinate Zn(2+). The Proton donor role is filled by Y132. H172 lines the Zn(2+) pocket.

Belongs to the aldolase class II family. AraD/FucA subfamily. Zn(2+) serves as cofactor.

The enzyme catalyses 3-dehydro-4-O-phospho-D-erythronate + H(+) = dihydroxyacetone phosphate + CO2. The catalysed reaction is 3-dehydro-4-O-phospho-L-erythronate + H(+) = dihydroxyacetone phosphate + CO2. Functionally, catalyzes the decarboxylation of 3-oxo-tetronate 4-phosphate to dihydroxyacetone phosphate (DHAP) and CO(2). The sequence is that of 3-oxo-tetronate 4-phosphate decarboxylase from Pectobacterium atrosepticum (strain SCRI 1043 / ATCC BAA-672) (Erwinia carotovora subsp. atroseptica).